The chain runs to 330 residues: Aspartate--ammonia ligase (330 aa).

It belongs to the class-II aminoacyl-tRNA synthetase family. AsnA subfamily.

The protein localises to the cytoplasm. The catalysed reaction is L-aspartate + NH4(+) + ATP = L-asparagine + AMP + diphosphate + H(+). The protein operates within amino-acid biosynthesis; L-asparagine biosynthesis; L-asparagine from L-aspartate (ammonia route): step 1/1. The protein is Aspartate--ammonia ligase of Streptococcus agalactiae serotype Ia (strain ATCC 27591 / A909 / CDC SS700).